Consider the following 365-residue polypeptide: 3-isopropylmalate dehydrogenase (365 aa).

78–91 (GPKWDTLPAEERPE) is an NAD(+) binding site. 4 residues coordinate substrate: Arg-99, Arg-109, Arg-138, and Asp-227. 3 residues coordinate Mg(2+): Asp-227, Asp-251, and Asp-255. 285 to 297 (GSAPDIAGKNIAN) is a binding site for NAD(+).

This sequence belongs to the isocitrate and isopropylmalate dehydrogenases family. LeuB type 1 subfamily. Homodimer. It depends on Mg(2+) as a cofactor. Mn(2+) serves as cofactor.

The protein localises to the cytoplasm. The catalysed reaction is (2R,3S)-3-isopropylmalate + NAD(+) = 4-methyl-2-oxopentanoate + CO2 + NADH. Its pathway is amino-acid biosynthesis; L-leucine biosynthesis; L-leucine from 3-methyl-2-oxobutanoate: step 3/4. Functionally, catalyzes the oxidation of 3-carboxy-2-hydroxy-4-methylpentanoate (3-isopropylmalate) to 3-carboxy-4-methyl-2-oxopentanoate. The product decarboxylates to 4-methyl-2 oxopentanoate. In Syntrophotalea carbinolica (strain DSM 2380 / NBRC 103641 / GraBd1) (Pelobacter carbinolicus), this protein is 3-isopropylmalate dehydrogenase.